Reading from the N-terminus, the 365-residue chain is Histidinol-phosphate aminotransferase (365 aa).

Lysine 222 carries the post-translational modification N6-(pyridoxal phosphate)lysine.

It belongs to the class-II pyridoxal-phosphate-dependent aminotransferase family. Histidinol-phosphate aminotransferase subfamily. In terms of assembly, homodimer. The cofactor is pyridoxal 5'-phosphate.

The enzyme catalyses L-histidinol phosphate + 2-oxoglutarate = 3-(imidazol-4-yl)-2-oxopropyl phosphate + L-glutamate. The protein operates within amino-acid biosynthesis; L-histidine biosynthesis; L-histidine from 5-phospho-alpha-D-ribose 1-diphosphate: step 7/9. The polypeptide is Histidinol-phosphate aminotransferase (Geobacillus thermodenitrificans (strain NG80-2)).